Consider the following 123-residue polypeptide: Small ribosomal subunit protein uS12c (123 aa).

It belongs to the universal ribosomal protein uS12 family. Part of the 30S ribosomal subunit.

It is found in the plastid. Its subcellular location is the chloroplast. In terms of biological role, with S4 and S5 plays an important role in translational accuracy. Located at the interface of the 30S and 50S subunits. The protein is Small ribosomal subunit protein uS12c (rps12) of Marchantia polymorpha (Common liverwort).